Reading from the N-terminus, the 459-residue chain is Argininosuccinate lyase (459 aa).

Belongs to the lyase 1 family. Argininosuccinate lyase subfamily.

It is found in the cytoplasm. The enzyme catalyses 2-(N(omega)-L-arginino)succinate = fumarate + L-arginine. The protein operates within amino-acid biosynthesis; L-arginine biosynthesis; L-arginine from L-ornithine and carbamoyl phosphate: step 3/3. The sequence is that of Argininosuccinate lyase from Methylobacterium radiotolerans (strain ATCC 27329 / DSM 1819 / JCM 2831 / NBRC 15690 / NCIMB 10815 / 0-1).